Here is a 524-residue protein sequence, read N- to C-terminus: Sterol O-acyltransferase 2 (524 aa).

The disordered stretch occupies residues 1-31; the sequence is MEPKAPQLRRRERQGEEQENGACGEGNTRTH. At 1-118 the chain is on the cytoplasmic side; that stretch reads MEPKAPQLRR…LDELMGVQHF (118 aa). His-117 provides a ligand contact to cholesterol. A helical transmembrane segment spans residues 119 to 140; sequence RTIYHMFIAGLCVLIISTLAID. The Lumenal portion of the chain corresponds to 141–160; the sequence is FIDEGRLMLEFDLLLFSFGQ. The helical transmembrane segment at 161–186 threads the bilayer; sequence LPLALMMWVPMFLSTLLLPYQTLRLW. The Cytoplasmic portion of the chain corresponds to 187-198; sequence ARPRSGGAWTLG. Residues 199–222 traverse the membrane as a helical segment; it reads ASLGCVLLAAHAAVLCVLPVHVSV. Residues 223–230 are Lumenal-facing; the sequence is KHELPPAS. The helical transmembrane segment at 231-254 threads the bilayer; the sequence is RCVLVFEQVRFLMKSYSFLRETVP. At 255-295 the chain is on the cytoplasmic side; it reads GIFCVRGGKGICTPSFSSYLYFLFCPTLIYRETYPRTPSIR. Cys-279 carries the post-translational modification Cysteine sulfenic acid (-SOH); alternate. Residue Cys-279 forms a Glycyl cysteine thioester (Cys-Gly) (interchain with G-Cter in ubiquitin); alternate linkage. The chain crosses the membrane as a helical span at residues 296 to 328; the sequence is WNYVAKNFAQALGCLLYACFILGRLCVPVFANM. Topologically, residues 329–345 are lumenal; that stretch reads SREPFSTRALLLSILHA. The helical transmembrane segment at 346 to 371 threads the bilayer; that stretch reads TGPGIFMLLLIFFAFLHCWLNAFAEM. Over 372–419 the chain is Cytoplasmic; it reads LRFGDRMFYRDWWNSTSFSNYYRTWNVVVHDWLYSYVYQDGLWLLGRQ. The short motif at 379–385 is the FYXDWWN motif element; that stretch reads FYRDWWN. 6 residues coordinate an acyl-CoA: Asn-391, Arg-394, Asn-397, His-401, Tyr-409, and Ser-432. Residues 420 to 444 traverse the membrane as a helical segment; sequence GRGAAMLGVFLVSALVHEYIFCFVL. His-436 is an active-site residue. At 445–450 the chain is on the lumenal side; the sequence is GFFYPV. A helical membrane pass occupies residues 451–466; sequence MLILFLVVGGLLNFTM. The Cytoplasmic portion of the chain corresponds to 467-472; it reads NDRHTG. Residues 473 to 504 traverse the membrane as a helical segment; the sequence is PAWNILMWTFLFLGQGIQVSLYCQEWYARRHC. At 505 to 524 the chain is on the lumenal side; the sequence is PLPQPTFWELVTPRSWSCHP.

The protein belongs to the membrane-bound acyltransferase family. Sterol o-acyltransferase subfamily. In terms of assembly, may form homo- or heterodimers. Interacts with INSIG1; the interaction is direct and promotes association with AMFR/gp78. Polyubiquitinated by AMFR/gp78 at Cys-279, leading to its degradation when the lipid levels are low. Association with AMFR/gp78 is mediated via interaction with INSIG1. High concentration of cholesterol and fatty acid results in Cys-279 oxidation, preventing ubiquitination at the same site, resulting in protein stabilization. Post-translationally, oxidized at Cys-279: high concentration of cholesterol and fatty acid induce reactive oxygen species, which oxidizes Cys-279, preventing ubiquitination at the same site, and resulting in protein stabilization.

It is found in the endoplasmic reticulum membrane. It catalyses the reaction a sterol + a long-chain fatty acyl-CoA = a long-chain 3-hydroxysterol ester + CoA. The enzyme catalyses cholesterol + an acyl-CoA = a cholesterol ester + CoA. It carries out the reaction cholesterol + (9Z)-octadecenoyl-CoA = cholesteryl (9Z-octadecenoate) + CoA. The catalysed reaction is (5Z,8Z,11Z,14Z,17Z)-eicosapentaenoyl-CoA + cholesterol = (5Z,8Z,11Z,14Z,17Z-eicosapentaenoyl)-cholesterol + CoA. It catalyses the reaction (9Z,12Z,15Z)-octadecatrienoyl-CoA + cholesterol = (9Z,12Z,15Z-octadecatrienoyl)-cholesterol + CoA. The enzyme catalyses (5Z,8Z,11Z,14Z)-eicosatetraenoyl-CoA + cholesterol = cholesteryl (5Z,8Z,11Z,14Z)-eicosatetraenoate + CoA. Catalyzes the formation of fatty acid-cholesterol esters, which are less soluble in membranes than cholesterol. Plays a role in lipoprotein assembly and dietary cholesterol absorption. Utilizes oleoyl-CoA ((9Z)-octadecenoyl-CoA) and linolenoyl-CoA ((9Z,12Z,15Z)-octadecatrienoyl-CoA) as substrates. May provide cholesteryl esters for lipoprotein secretion from hepatocytes and intestinal mucosa. The chain is Sterol O-acyltransferase 2 from Rattus norvegicus (Rat).